Consider the following 203-residue polypeptide: Protein GrpE (203 aa).

Residues 1–20 are compositionally biased toward polar residues; that stretch reads MSDNGDNNTKSPQHNNPQPN. The disordered stretch occupies residues 1–46; sequence MSDNGDNNTKSPQHNNPQPNEKSDGKVQPGQPQVNPQRKFTAGINK.

Belongs to the GrpE family. As to quaternary structure, homodimer.

It localises to the cytoplasm. Its function is as follows. Participates actively in the response to hyperosmotic and heat shock by preventing the aggregation of stress-denatured proteins, in association with DnaK and GrpE. It is the nucleotide exchange factor for DnaK and may function as a thermosensor. Unfolded proteins bind initially to DnaJ; upon interaction with the DnaJ-bound protein, DnaK hydrolyzes its bound ATP, resulting in the formation of a stable complex. GrpE releases ADP from DnaK; ATP binding to DnaK triggers the release of the substrate protein, thus completing the reaction cycle. Several rounds of ATP-dependent interactions between DnaJ, DnaK and GrpE are required for fully efficient folding. The protein is Protein GrpE of Ehrlichia chaffeensis (strain ATCC CRL-10679 / Arkansas).